Consider the following 199-residue polypeptide: MSDSDNNTKSQQNNPTQTDEKSGEEIQSNQKPQRKFTAVLNKKKEKLNEDLSELDKLKQQLAHFQNQFRLAVADKENVKRIMQKNIDDTSIYAISNFARDLLSSCDNLETSLKNLKEDDSIHAGVLMTYKELLNTLERHNITRIDPIGEKFNPQFHKAVSQMTDEDKDENTILHVVQPGYIIKDKLLRPASVIISKKSD.

Polar residues predominate over residues 1-17 (MSDSDNNTKSQQNNPTQ). The segment at 1-36 (MSDSDNNTKSQQNNPTQTDEKSGEEIQSNQKPQRKF) is disordered.

It belongs to the GrpE family. Homodimer.

It localises to the cytoplasm. Functionally, participates actively in the response to hyperosmotic and heat shock by preventing the aggregation of stress-denatured proteins, in association with DnaK and GrpE. It is the nucleotide exchange factor for DnaK and may function as a thermosensor. Unfolded proteins bind initially to DnaJ; upon interaction with the DnaJ-bound protein, DnaK hydrolyzes its bound ATP, resulting in the formation of a stable complex. GrpE releases ADP from DnaK; ATP binding to DnaK triggers the release of the substrate protein, thus completing the reaction cycle. Several rounds of ATP-dependent interactions between DnaJ, DnaK and GrpE are required for fully efficient folding. This Ehrlichia canis (strain Jake) protein is Protein GrpE.